The primary structure comprises 118 residues: Large ribosomal subunit protein uL18 (118 aa).

The protein belongs to the universal ribosomal protein uL18 family. In terms of assembly, part of the 50S ribosomal subunit; part of the 5S rRNA/L5/L18/L25 subcomplex. Contacts the 5S and 23S rRNAs.

This is one of the proteins that bind and probably mediate the attachment of the 5S RNA into the large ribosomal subunit, where it forms part of the central protuberance. This chain is Large ribosomal subunit protein uL18, found in Campylobacter jejuni subsp. jejuni serotype O:2 (strain ATCC 700819 / NCTC 11168).